Here is a 289-residue protein sequence, read N- to C-terminus: Heme oxygenase 1 (289 aa).

Over residues 1-12 (MERPQPDSSMPQ) the composition is skewed to polar residues. The interval 1-24 (MERPQPDSSMPQDLSEALKEATKE) is disordered. Residues 1 to 266 (MERPQPDSSM…KPQPSVLSQA (266 aa)) are Cytoplasmic-facing. 4 residues coordinate heme b: K19, H26, Y135, and R184. The segment at 239–261 (RRAGSKVQDLAPTKASRGKPQPS) is disordered. S243 carries the post-translational modification Phosphoserine. The helical; Anchor for type IV membrane protein transmembrane segment at 267–289 (PLLRWVLTLSFLVATVAVGLYAM) threads the bilayer.

It belongs to the heme oxygenase family. In terms of assembly, homodimer and higher order homooligomer. Oligomerization is crucial for its stability and function in the endoplasmic reticulum. Interacts with FLVCR2; this interaction is potentiated in the presence of heme. Post-translationally, a soluble form arises by proteolytic removal of the membrane anchor.

The protein resides in the endoplasmic reticulum membrane. The catalysed reaction is heme b + 3 reduced [NADPH--hemoprotein reductase] + 3 O2 = biliverdin IXalpha + CO + Fe(2+) + 3 oxidized [NADPH--hemoprotein reductase] + 3 H2O + H(+). Inhibited by metalloporphyrins such as Sn-, Co-, Mn- and Zn-protoporphyrins. Functionally, catalyzes the oxidative cleavage of heme at the alpha-methene bridge carbon, released as carbon monoxide (CO), to generate biliverdin IXalpha, while releasing the central heme iron chelate as ferrous iron. Affords protection against programmed cell death and this cytoprotective effect relies on its ability to catabolize free heme and prevent it from sensitizing cells to undergo apoptosis. Its function is as follows. Catalyzes the oxidative cleavage of heme at the alpha-methene bridge carbon, released as carbon monoxide (CO), to generate biliverdin IXalpha, while releasing the central heme iron chelate as ferrous iron. The polypeptide is Heme oxygenase 1 (HMOX1) (Bos taurus (Bovine)).